Reading from the N-terminus, the 589-residue chain is Protein FAM117B (589 aa).

Positions 1 to 310 (MSQRVRRNGS…RDKERQSPFH (310 aa)) are disordered. Ser10 is subject to Phosphoserine. Residues 16 to 29 (SLGGGAVATAGGPG) are compositionally biased toward gly residues. Positions 45–56 (QQQQQQHGSPTR) are enriched in low complexity. Residues 57–85 (SGGGGGGNNNGGCCGGASGPAGGGGGGGP) are compositionally biased toward gly residues. Ser106 is subject to Phosphoserine. The segment covering 108–136 (TVATQTGASATSTRGTSPTRSAAPGARGS) has biased composition (low complexity). A compositionally biased stretch (pro residues) spans 137–146 (PPRPPPPPPL). 2 stretches are compositionally biased toward low complexity: residues 147 to 158 (LGTVSSPSSSPT) and 207 to 220 (PSSS…RTSS). Phosphoserine is present on residues Ser210, Ser219, Ser220, and Ser273. Residues 292–302 (RSKHSSRHHRD) show a composition bias toward basic residues. Phosphoserine occurs at positions 345 and 391. Disordered stretches follow at residues 370-464 (QDIP…NNSY) and 556-589 (STNT…EAEG). Over residues 384-397 (QRSSSTRSIDTQTP) the composition is skewed to polar residues. Residues 404 to 417 (SNNSSRSQSVSPTS) show a composition bias toward low complexity. Residues Ser449 and Ser457 each carry the phosphoserine modification.

This is Protein FAM117B (FAM117B) from Homo sapiens (Human).